The sequence spans 411 residues: Carbohydrate sulfotransferase 5 (411 aa).

Residues 1–30 (MGMRARVPKVAHSTRRPPAARMWLPRFSSK) are Cytoplasmic-facing. Residues 31 to 48 (TVTVLLLAQTTCLLLFII) traverse the membrane as a helical; Signal-anchor for type II membrane protein segment. The Lumenal portion of the chain corresponds to 49–411 (SRPGPSSPAG…PDHFSWASPD (363 aa)). 71 to 77 (WRSGSSF) is a binding site for 3'-phosphoadenylyl sulfate. Residue Asn-138 is glycosylated (N-linked (GlcNAc...) asparagine). 224–232 (RDPRAVLRS) lines the 3'-phosphoadenylyl sulfate pocket. Asn-327 and Asn-350 each carry an N-linked (GlcNAc...) asparagine glycan.

The protein belongs to the sulfotransferase 1 family. Gal/GlcNAc/GalNAc subfamily. In terms of tissue distribution, predominantly expressed in small and large intestines and colon. Weakly expressed in lymphocytes. Not expressed in other tissues. Down-regulated in colonic adenocarcinomas.

The protein resides in the golgi apparatus membrane. In terms of biological role, sulfotransferase that utilizes 3'-phospho-5'-adenylyl sulfate (PAPS) as sulfonate donor to catalyze the transfer of sulfate to position 6 of non-reducing N-acetylglucosamine (GlcNAc) residues and O-linked sugars of mucin-type acceptors. Acts on the non-reducing terminal GlcNAc of short carbohydrate substrates. However, it does not transfer sulfate to longer carbohydrate substrates that have poly-N-acetyllactosamine structures. Has no activity toward keratan. Not involved in generating HEV-expressed ligands for SELL. Its substrate specificity may be influenced by its subcellular location. In Homo sapiens (Human), this protein is Carbohydrate sulfotransferase 5 (CHST5).